The primary structure comprises 128 residues: Large ribosomal subunit protein bL17 (128 aa).

Belongs to the bacterial ribosomal protein bL17 family. As to quaternary structure, part of the 50S ribosomal subunit. Contacts protein L32.

This Vibrio cholerae serotype O1 (strain ATCC 39541 / Classical Ogawa 395 / O395) protein is Large ribosomal subunit protein bL17.